A 239-amino-acid chain; its full sequence is tRNA (guanine-N(7)-)-methyltransferase (239 aa).

The S-adenosyl-L-methionine site is built by Glu-69, Glu-94, Asp-121, and Asp-144. Asp-144 is a catalytic residue. Lys-148 lines the substrate pocket. Residues 150–155 (RHNKRR) are interaction with RNA. Substrate is bound by residues Asp-180 and 217-220 (TKFE).

The protein belongs to the class I-like SAM-binding methyltransferase superfamily. TrmB family. Monomer.

It carries out the reaction guanosine(46) in tRNA + S-adenosyl-L-methionine = N(7)-methylguanosine(46) in tRNA + S-adenosyl-L-homocysteine. It participates in tRNA modification; N(7)-methylguanine-tRNA biosynthesis. In terms of biological role, catalyzes the formation of N(7)-methylguanine at position 46 (m7G46) in tRNA. The protein is tRNA (guanine-N(7)-)-methyltransferase of Photorhabdus laumondii subsp. laumondii (strain DSM 15139 / CIP 105565 / TT01) (Photorhabdus luminescens subsp. laumondii).